The sequence spans 356 residues: Cyanide hydratase (356 aa).

The region spanning 8–287 (YKAAAVNAEP…EGLLFVDIDL (280 aa)) is the CN hydrolase domain. The active-site Proton acceptor is the E48. The active site involves K130. C165 functions as the Nucleophile in the catalytic mechanism.

This sequence belongs to the carbon-nitrogen hydrolase superfamily. Nitrilase family. In terms of assembly, oligomer of dimers, forming left-handed helical fibers.

The catalysed reaction is formamide = hydrogen cyanide + H2O. Its function is as follows. Catalyzes the hydration of cyanide to formamide. Degradation of cyanide may be important for plant pathogenic fungi in infection of cyanogenic plants. Can also transform some nitriles like 2-cyanopyridine and fumaronitrile. The chain is Cyanide hydratase from Aspergillus niger.